The following is a 287-amino-acid chain: Bifunctional protein FolD (287 aa).

NADP(+) is bound by residues 160-162 (GRS), S189, and T230.

It belongs to the tetrahydrofolate dehydrogenase/cyclohydrolase family. As to quaternary structure, homodimer.

It carries out the reaction (6R)-5,10-methylene-5,6,7,8-tetrahydrofolate + NADP(+) = (6R)-5,10-methenyltetrahydrofolate + NADPH. The catalysed reaction is (6R)-5,10-methenyltetrahydrofolate + H2O = (6R)-10-formyltetrahydrofolate + H(+). It participates in one-carbon metabolism; tetrahydrofolate interconversion. Catalyzes the oxidation of 5,10-methylenetetrahydrofolate to 5,10-methenyltetrahydrofolate and then the hydrolysis of 5,10-methenyltetrahydrofolate to 10-formyltetrahydrofolate. This chain is Bifunctional protein FolD, found in Chlamydia trachomatis serovar D (strain ATCC VR-885 / DSM 19411 / UW-3/Cx).